Consider the following 277-residue polypeptide: Thymidylate synthase (277 aa).

Arg-27 contacts dUMP. His-57 is a (6R)-5,10-methylene-5,6,7,8-tetrahydrofolate binding site. Position 132-133 (132-133 (RR)) interacts with dUMP. Cys-152 serves as the catalytic Nucleophile. DUMP contacts are provided by residues 179 to 182 (RSAD), Asn-190, and 220 to 222 (HIY). Residue Asp-182 coordinates (6R)-5,10-methylene-5,6,7,8-tetrahydrofolate. Position 276 (Ala-276) interacts with (6R)-5,10-methylene-5,6,7,8-tetrahydrofolate.

The protein belongs to the thymidylate synthase family. Bacterial-type ThyA subfamily. As to quaternary structure, homodimer.

It is found in the cytoplasm. The enzyme catalyses dUMP + (6R)-5,10-methylene-5,6,7,8-tetrahydrofolate = 7,8-dihydrofolate + dTMP. It participates in pyrimidine metabolism; dTTP biosynthesis. Catalyzes the reductive methylation of 2'-deoxyuridine-5'-monophosphate (dUMP) to 2'-deoxythymidine-5'-monophosphate (dTMP) while utilizing 5,10-methylenetetrahydrofolate (mTHF) as the methyl donor and reductant in the reaction, yielding dihydrofolate (DHF) as a by-product. This enzymatic reaction provides an intracellular de novo source of dTMP, an essential precursor for DNA biosynthesis. The sequence is that of Thymidylate synthase from Acidovorax sp. (strain JS42).